A 360-amino-acid chain; its full sequence is Mediator of RNA polymerase II transcription subunit 6 (360 aa).

2 disordered regions span residues 186 to 238 and 316 to 360; these read PAQP…NDPL and AAAA…PGAA. Low complexity-rich tracts occupy residues 190 to 205 and 316 to 325; these read SAGA…YTAS and AAAAAANANA.

This sequence belongs to the Mediator complex subunit 6 family. In terms of assembly, component of the Mediator complex.

Its subcellular location is the nucleus. Its function is as follows. Component of the Mediator complex, a coactivator involved in the regulated transcription of nearly all RNA polymerase II-dependent genes. Mediator functions as a bridge to convey information from gene-specific regulatory proteins to the basal RNA polymerase II transcription machinery. Mediator is recruited to promoters by direct interactions with regulatory proteins and serves as a scaffold for the assembly of a functional preinitiation complex with RNA polymerase II and the general transcription factors. The chain is Mediator of RNA polymerase II transcription subunit 6 (med-6) from Neurospora crassa (strain ATCC 24698 / 74-OR23-1A / CBS 708.71 / DSM 1257 / FGSC 987).